The following is a 309-amino-acid chain: Tagatose-6-phosphate kinase (309 aa).

Belongs to the carbohydrate kinase PfkB family. LacC subfamily.

The catalysed reaction is D-tagatofuranose 6-phosphate + ATP = D-tagatofuranose 1,6-bisphosphate + ADP + H(+). It participates in carbohydrate metabolism; D-tagatose 6-phosphate degradation; D-glyceraldehyde 3-phosphate and glycerone phosphate from D-tagatose 6-phosphate: step 1/2. The sequence is that of Tagatose-6-phosphate kinase from Streptococcus pyogenes serotype M18 (strain MGAS8232).